A 776-amino-acid chain; its full sequence is Bifunctional lysine-specific demethylase and histidyl-hydroxylase NO66 (776 aa).

Disordered regions lie at residues 1–57, 87–126, and 165–288; these read MGKK…EPKF, EQNG…AHKH, and ILDE…DDEG. Composition is skewed to basic and acidic residues over residues 47-57 and 98-119; these read HYKEPSKEPKF and EISP…DGVA. Acidic residues predominate over residues 166 to 204; that stretch reads LDEEVEDEEIDEEEFEDEEEVEDEEGMDEDETEIDESEM. Positions 206–216 are enriched in basic and acidic residues; it reads VDPKDIERCIE. The span at 217–288 shows a compositional bias: acidic residues; sequence FEDVDDEDEM…EMDADSDDEG (72 aa). Residues 425-569 form the JmjC domain; that stretch reads QLVNPQTFDD…NLMEKVIPEA (145 aa). Residues His468, Asp470, and His535 each contribute to the Fe cation site.

The protein belongs to the ROX family. NO66 subfamily. It depends on Fe(2+) as a cofactor.

The protein localises to the nucleus. The enzyme catalyses N(6),N(6)-dimethyl-L-lysyl(36)-[histone H3] + 2 2-oxoglutarate + 2 O2 = L-lysyl(36)-[histone H3] + 2 formaldehyde + 2 succinate + 2 CO2. Its function is as follows. Oxygenase that can act as both a histone lysine demethylase and a ribosomal histidine hydroxylase. Specifically demethylates 'Lys-4' (H3K4me) and 'Lys-36' (H3K36me) of histone H3, thereby playing a central role in histone code. The protein is Bifunctional lysine-specific demethylase and histidyl-hydroxylase NO66 (jmjc-1) of Caenorhabditis briggsae.